Here is an 874-residue protein sequence, read N- to C-terminus: Alanine--tRNA ligase (874 aa).

Residues His-562, His-566, Cys-665, and His-669 each coordinate Zn(2+).

It belongs to the class-II aminoacyl-tRNA synthetase family. Zn(2+) is required as a cofactor.

It localises to the cytoplasm. The enzyme catalyses tRNA(Ala) + L-alanine + ATP = L-alanyl-tRNA(Ala) + AMP + diphosphate. In terms of biological role, catalyzes the attachment of alanine to tRNA(Ala) in a two-step reaction: alanine is first activated by ATP to form Ala-AMP and then transferred to the acceptor end of tRNA(Ala). Also edits incorrectly charged Ser-tRNA(Ala) and Gly-tRNA(Ala) via its editing domain. In Pseudomonas aeruginosa (strain ATCC 15692 / DSM 22644 / CIP 104116 / JCM 14847 / LMG 12228 / 1C / PRS 101 / PAO1), this protein is Alanine--tRNA ligase.